The chain runs to 233 residues: 7-cyano-7-deazaguanine synthase (233 aa).

8-18 lines the ATP pocket; that stretch reads LSGGLDSTTCM. Cysteine 186, cysteine 194, cysteine 197, and cysteine 200 together coordinate Zn(2+).

The protein belongs to the QueC family. As to quaternary structure, homodimer. The cofactor is Zn(2+).

The enzyme catalyses 7-carboxy-7-deazaguanine + NH4(+) + ATP = 7-cyano-7-deazaguanine + ADP + phosphate + H2O + H(+). It functions in the pathway purine metabolism; 7-cyano-7-deazaguanine biosynthesis. In terms of biological role, catalyzes the ATP-dependent conversion of 7-carboxy-7-deazaguanine (CDG) to 7-cyano-7-deazaguanine (preQ(0)). The chain is 7-cyano-7-deazaguanine synthase from Desulfitobacterium hafniense (strain DSM 10664 / DCB-2).